We begin with the raw amino-acid sequence, 76 residues long: Small ribosomal subunit protein bS16 (76 aa).

This sequence belongs to the bacterial ribosomal protein bS16 family.

This is Small ribosomal subunit protein bS16 from Helicobacter pylori (strain P12).